Consider the following 145-residue polypeptide: Cell wall teichoic acid glycosylation protein GtcA (145 aa).

4 helical membrane-spanning segments follow: residues 21–41, 52–69, 96–116, and 121–141; these read ILMY…TFWL, IANT…YFSN, FLTY…LSIN, and KIWT…WIIF.

Belongs to the GtrA family.

The protein resides in the cell membrane. Involved in the decoration of cell wall teichoic acid with galactose and glucose. This chain is Cell wall teichoic acid glycosylation protein GtcA (gtcA), found in Listeria monocytogenes serovar 1/2a (strain ATCC BAA-679 / EGD-e).